Here is a 779-residue protein sequence, read N- to C-terminus: Autophagy-related protein 13 (779 aa).

Disordered regions lie at residues 298-368, 392-488, 520-541, and 571-652; these read PLTE…GGSL, PRSS…LTGG, TAHN…DALN, and GSGS…SAAT. Over residues 308-320 the composition is skewed to polar residues; the sequence is KANNTSMSVSPCS. Over residues 394–425 the composition is skewed to low complexity; the sequence is SSTSSTHTTSNIPIAPSSSSNSTNATNMNNMS. Polar residues predominate over residues 426-455; that stretch reads YPRSISSSHGSNMQHDDSMFSNPDSTTNTP. The span at 456-470 shows a compositional bias: low complexity; that stretch reads RFSSSFGSRASRRYS. Polar residues-rich tracts occupy residues 471–488 and 520–533; these read NTSV…LTGG and TAHN…NMGS. 2 stretches are compositionally biased toward low complexity: residues 593-602 and 620-632; these read SIRSPSPSMS and SSGA…LSLP. The span at 642 to 652 shows a compositional bias: polar residues; it reads PSATEPTSAAT.

Belongs to the ATG13 family. Fungi subfamily. As to quaternary structure, interacts with ATG1 to form the ATG1-ATG13 kinase complex.

The protein resides in the cytoplasm. The protein localises to the preautophagosomal structure. Activates the ATG1 kinase in a nutritional condition dependent manner through the TOR pathway, leading to autophagy. Also involved in cytoplasm to vacuole transport (Cvt) and more specifically in Cvt vesicle formation. Seems to play a role in the switching machinery regulating the conversion between the Cvt pathway and autophagy. Finally, ATG13 is also required for glycogen storage during stationary phase. This chain is Autophagy-related protein 13 (ATG13), found in Scheffersomyces stipitis (strain ATCC 58785 / CBS 6054 / NBRC 10063 / NRRL Y-11545) (Yeast).